The following is a 195-amino-acid chain: PE-PGRS family protein PE_PGRS61 (195 aa).

This sequence belongs to the mycobacterial PE family. PGRS subfamily. As to quaternary structure, interacts with human TLR2.

The protein localises to the secreted. The protein resides in the cell wall. It is found in the cell surface. Binding of Ca(2+) to PE_PGRS61 induces conformational changes and increases affinity for TLR2. In terms of biological role, mediates Ca(2+)-dependent up-regulation of the anti-inflammatory cytokine IL-10. The sequence is that of PE-PGRS family protein PE_PGRS61 from Mycobacterium tuberculosis (strain ATCC 25618 / H37Rv).